A 203-amino-acid chain; its full sequence is GTP cyclohydrolase-2 (203 aa).

49–53 contacts GTP; sequence RIHSE. Residues C54, C65, and C67 each coordinate Zn(2+). GTP contacts are provided by residues Q70, 92–94, and T114; that span reads EGR. Catalysis depends on D126, which acts as the Proton acceptor. R128 acts as the Nucleophile in catalysis. Positions 149 and 154 each coordinate GTP.

This sequence belongs to the GTP cyclohydrolase II family. Requires Zn(2+) as cofactor.

It carries out the reaction GTP + 4 H2O = 2,5-diamino-6-hydroxy-4-(5-phosphoribosylamino)-pyrimidine + formate + 2 phosphate + 3 H(+). The protein operates within cofactor biosynthesis; riboflavin biosynthesis; 5-amino-6-(D-ribitylamino)uracil from GTP: step 1/4. Functionally, catalyzes the conversion of GTP to 2,5-diamino-6-ribosylamino-4(3H)-pyrimidinone 5'-phosphate (DARP), formate and pyrophosphate. The polypeptide is GTP cyclohydrolase-2 (Shewanella oneidensis (strain ATCC 700550 / JCM 31522 / CIP 106686 / LMG 19005 / NCIMB 14063 / MR-1)).